The sequence spans 428 residues: Isocitrate dehydrogenase [NADP], mitochondrial (428 aa).

A mitochondrion-targeting transit peptide spans 1 to 16; that stretch reads MSMLSRRLFSTSRLAA. NADP(+) contacts are provided by residues 91-93 and arginine 98; that span reads TIT. A substrate-binding site is contributed by threonine 93. Residues 110–116, arginine 125, and arginine 148 each bind substrate; that span reads SPNGTIR. Aspartate 269 is a Mn(2+) binding site. NADP(+) is bound at residue lysine 277. Aspartate 292 provides a ligand contact to Mn(2+). Residues 327 to 332 and asparagine 345 each bind NADP(+); that span reads GTVTRH.

It belongs to the isocitrate and isopropylmalate dehydrogenases family. Homodimer. It depends on Mg(2+) as a cofactor. The cofactor is Mn(2+).

Its subcellular location is the mitochondrion. It carries out the reaction D-threo-isocitrate + NADP(+) = 2-oxoglutarate + CO2 + NADPH. Its activity is regulated as follows. The enzyme is subject to end product inhibition by NADPH and 2-oxoglutarate. Mitochondrial IDP1 may regulate flux through the tricarboxylic acid cycle and respiration. Its probably critical function is the production of NADPH. The sequence is that of Isocitrate dehydrogenase [NADP], mitochondrial (IDP1) from Saccharomyces cerevisiae (strain ATCC 204508 / S288c) (Baker's yeast).